The chain runs to 300 residues: Probable lipid kinase YegS-like (300 aa).

Residues 1 to 129 (MSKKALLILH…CDVIRVNNHY (129 aa)) form the DAGKc domain. Residues Thr38, 64 to 70 (GDGSVRD), and Thr92 each bind ATP. Mg(2+)-binding residues include Leu210, Asp213, and Leu215. Catalysis depends on Glu272, which acts as the Proton acceptor.

This sequence belongs to the diacylglycerol/lipid kinase family. YegS lipid kinase subfamily. Mg(2+) serves as cofactor. Ca(2+) is required as a cofactor.

It localises to the cytoplasm. In terms of biological role, probably phosphorylates lipids; the in vivo substrate is unknown. This is Probable lipid kinase YegS-like from Alcanivorax borkumensis (strain ATCC 700651 / DSM 11573 / NCIMB 13689 / SK2).